Here is a 462-residue protein sequence, read N- to C-terminus: Phosphoglucosamine mutase (462 aa).

The active-site Phosphoserine intermediate is the Ser-112. 4 residues coordinate Mg(2+): Ser-112, Asp-250, Asp-252, and Asp-254. Position 112 is a phosphoserine (Ser-112).

It belongs to the phosphohexose mutase family. Mg(2+) serves as cofactor. Activated by phosphorylation.

It carries out the reaction alpha-D-glucosamine 1-phosphate = D-glucosamine 6-phosphate. Its function is as follows. Catalyzes the conversion of glucosamine-6-phosphate to glucosamine-1-phosphate. The protein is Phosphoglucosamine mutase of Parasynechococcus marenigrum (strain WH8102).